We begin with the raw amino-acid sequence, 473 residues long: uncharacterized protein (473 aa).

The segment at 1–86 (MSSSPTESEI…NTSNYGSSRD (86 aa)) is disordered. Over residues 10 to 19 (ILPKESHNSI) the composition is skewed to basic and acidic residues. 2 stretches are compositionally biased toward polar residues: residues 20 to 39 (DEQS…NSFN) and 55 to 68 (EPVQ…PNMA). At serine 64 the chain carries Phosphoserine. Low complexity predominate over residues 69 to 83 (SNESGNSENTSNYGS). 3 RRM domains span residues 95–165 (LWMG…NHLF), 188–260 (IFVG…PIRV), and 305–370 (VFVG…RIRL). The disordered stretch occupies residues 448–473 (MHIPENGNSDTMPVPNTQGKHLSAEE). A compositionally biased stretch (polar residues) spans 453 to 467 (NGNSDTMPVPNTQGK).

This is an uncharacterized protein from Schizosaccharomyces pombe (strain 972 / ATCC 24843) (Fission yeast).